A 261-amino-acid polypeptide reads, in one-letter code: Phosphatidylglycerol--prolipoprotein diacylglyceryl transferase (261 aa).

4 helical membrane-spanning segments follow: residues 12-32 (ISIRWYAICIVTGLVLAVYLA), 41-61 (IIPDDILDFILVAFPVAIVGA), 87-107 (GIAGIAIYGGLIAGAIVLYFF), and 112-132 (LIHPVDFLDIAAPSVMIAQSI). A 1,2-diacyl-sn-glycero-3-phospho-(1'-sn-glycerol) is bound at residue Arg134. The next 3 membrane-spanning stretches (helical) occupy residues 170–190 (QPTFLYESVWNLIGFILIIVL), 200–220 (GEIAAFYLIWYGFGRMIIEGM), and 229–249 (GLRVSQWLSLILIFVGIGIII).

The protein belongs to the Lgt family.

It localises to the cell membrane. The enzyme catalyses L-cysteinyl-[prolipoprotein] + a 1,2-diacyl-sn-glycero-3-phospho-(1'-sn-glycerol) = an S-1,2-diacyl-sn-glyceryl-L-cysteinyl-[prolipoprotein] + sn-glycerol 1-phosphate + H(+). Its pathway is protein modification; lipoprotein biosynthesis (diacylglyceryl transfer). Catalyzes the transfer of the diacylglyceryl group from phosphatidylglycerol to the sulfhydryl group of the N-terminal cysteine of a prolipoprotein, the first step in the formation of mature lipoproteins. This Streptococcus sanguinis (strain SK36) protein is Phosphatidylglycerol--prolipoprotein diacylglyceryl transferase.